Reading from the N-terminus, the 363-residue chain is Histidinol-phosphate aminotransferase (363 aa).

K220 is modified (N6-(pyridoxal phosphate)lysine).

The protein belongs to the class-II pyridoxal-phosphate-dependent aminotransferase family. Histidinol-phosphate aminotransferase subfamily. In terms of assembly, homodimer. Requires pyridoxal 5'-phosphate as cofactor.

It catalyses the reaction L-histidinol phosphate + 2-oxoglutarate = 3-(imidazol-4-yl)-2-oxopropyl phosphate + L-glutamate. Its pathway is amino-acid biosynthesis; L-histidine biosynthesis; L-histidine from 5-phospho-alpha-D-ribose 1-diphosphate: step 7/9. This Chlorobium chlorochromatii (strain CaD3) protein is Histidinol-phosphate aminotransferase.